The chain runs to 248 residues: Ubiquinone/menaquinone biosynthesis C-methyltransferase UbiE (248 aa).

S-adenosyl-L-methionine is bound by residues Thr71, Asp92, and 120-121 (DA).

The protein belongs to the class I-like SAM-binding methyltransferase superfamily. MenG/UbiE family.

The enzyme catalyses a 2-demethylmenaquinol + S-adenosyl-L-methionine = a menaquinol + S-adenosyl-L-homocysteine + H(+). The catalysed reaction is a 2-methoxy-6-(all-trans-polyprenyl)benzene-1,4-diol + S-adenosyl-L-methionine = a 5-methoxy-2-methyl-3-(all-trans-polyprenyl)benzene-1,4-diol + S-adenosyl-L-homocysteine + H(+). It participates in quinol/quinone metabolism; menaquinone biosynthesis; menaquinol from 1,4-dihydroxy-2-naphthoate: step 2/2. Its pathway is cofactor biosynthesis; ubiquinone biosynthesis. Its function is as follows. Methyltransferase required for the conversion of demethylmenaquinol (DMKH2) to menaquinol (MKH2) and the conversion of 2-polyprenyl-6-methoxy-1,4-benzoquinol (DDMQH2) to 2-polyprenyl-3-methyl-6-methoxy-1,4-benzoquinol (DMQH2). This chain is Ubiquinone/menaquinone biosynthesis C-methyltransferase UbiE, found in Methylococcus capsulatus (strain ATCC 33009 / NCIMB 11132 / Bath).